The sequence spans 644 residues: Exoribonuclease 2 (644 aa).

The RNB domain occupies 189 to 516 (RQDLTALNFV…NHRLLKAVIK (328 aa)). The S1 motif domain maps to 561-643 (NTRFAAEIID…ETRSIIARPA (83 aa)).

Belongs to the RNR ribonuclease family. RNase II subfamily.

It localises to the cytoplasm. It catalyses the reaction Exonucleolytic cleavage in the 3'- to 5'-direction to yield nucleoside 5'-phosphates.. Involved in mRNA degradation. Hydrolyzes single-stranded polyribonucleotides processively in the 3' to 5' direction. In Salmonella agona (strain SL483), this protein is Exoribonuclease 2.